Here is a 662-residue protein sequence, read N- to C-terminus: DNA ligase (662 aa).

NAD(+)-binding positions include 31–35 (DKDYD) and 79–80 (SL). Lys-121 (N6-AMP-lysine intermediate) is an active-site residue. The NAD(+) site is built by Arg-143, Glu-177, and Lys-313. Zn(2+) contacts are provided by Cys-406, Cys-409, Cys-422, and Cys-428. The BRCT domain maps to 586–662 (VLESPFMGKT…LSEEEFENMI (77 aa)).

Belongs to the NAD-dependent DNA ligase family. LigA subfamily. Requires Mg(2+) as cofactor. Mn(2+) is required as a cofactor.

The enzyme catalyses NAD(+) + (deoxyribonucleotide)n-3'-hydroxyl + 5'-phospho-(deoxyribonucleotide)m = (deoxyribonucleotide)n+m + AMP + beta-nicotinamide D-nucleotide.. In terms of biological role, DNA ligase that catalyzes the formation of phosphodiester linkages between 5'-phosphoryl and 3'-hydroxyl groups in double-stranded DNA using NAD as a coenzyme and as the energy source for the reaction. It is essential for DNA replication and repair of damaged DNA. The sequence is that of DNA ligase from Clostridium perfringens (strain SM101 / Type A).